A 219-amino-acid polypeptide reads, in one-letter code: PRELI domain-containing protein 1, mitochondrial (219 aa).

The 139-residue stretch at T36–P174 folds into the PRELI/MSF1 domain.

Forms a complex with TRIAP1 in the mitochondrion intermembrane space. Interacts with OPA1 and AIFM1. In terms of tissue distribution, highly expressed in fetal liver; less expressed in fetal brain, lung, and kidney. At the adult stage, expression is drastically reduced in the liver but highly expressed in the spleen, brain, lung, lymph nodes and peripheral blood leukocytes.

The protein localises to the mitochondrion. It is found in the mitochondrion intermembrane space. It catalyses the reaction a 1,2-diacyl-sn-glycero-3-phosphate(in) = a 1,2-diacyl-sn-glycero-3-phosphate(out). In terms of biological role, involved in the modulation of the mitochondrial apoptotic pathway by ensuring the accumulation of cardiolipin (CL) in mitochondrial membranes. In vitro, the TRIAP1:PRELID1 complex mediates the transfer of phosphatidic acid (PA) between liposomes and probably functions as a PA transporter across the mitochondrion intermembrane space to provide PA for CL synthesis in the inner membrane. Regulates the mitochondrial apoptotic pathway in primary Th cells. Regulates Th cell differentiation by down-regulating STAT6 thereby reducing IL-4-induced Th2 cell number. May be important for the development of vital and immunocompetent organs. The polypeptide is PRELI domain-containing protein 1, mitochondrial (PRELID1) (Homo sapiens (Human)).